Consider the following 620-residue polypeptide: UvrABC system protein C (620 aa).

The 80-residue stretch at 13–92 (DKPGVYIMKN…IKKYSPRYNI (80 aa)) folds into the GIY-YIG domain. Residues 204–239 (TSIIKKLKLEMEKAAEELEFEKAAKIRDRILAIELI) enclose the UVR domain.

The protein belongs to the UvrC family. Interacts with UvrB in an incision complex.

The protein localises to the cytoplasm. Functionally, the UvrABC repair system catalyzes the recognition and processing of DNA lesions. UvrC both incises the 5' and 3' sides of the lesion. The N-terminal half is responsible for the 3' incision and the C-terminal half is responsible for the 5' incision. The polypeptide is UvrABC system protein C (Clostridium perfringens (strain 13 / Type A)).